The following is a 396-amino-acid chain: L-lactate dehydrogenase (396 aa).

One can recognise an FMN hydroxy acid dehydrogenase domain in the interval M1–D380. A substrate-binding site is contributed by Y24. The FMN site is built by S106 and Q127. Y129 serves as a coordination point for substrate. Residue T155 participates in FMN binding. R164 is a substrate binding site. K251 contributes to the FMN binding site. H275 functions as the Proton acceptor in the catalytic mechanism. R278 lines the substrate pocket. D306–R330 lines the FMN pocket.

The protein belongs to the FMN-dependent alpha-hydroxy acid dehydrogenase family. Requires FMN as cofactor.

It is found in the cell inner membrane. It catalyses the reaction (S)-lactate + A = pyruvate + AH2. Its function is as follows. Catalyzes the conversion of L-lactate to pyruvate. Is coupled to the respiratory chain. The chain is L-lactate dehydrogenase from Escherichia fergusonii (strain ATCC 35469 / DSM 13698 / CCUG 18766 / IAM 14443 / JCM 21226 / LMG 7866 / NBRC 102419 / NCTC 12128 / CDC 0568-73).